The chain runs to 211 residues: Protein-L-isoaspartate O-methyltransferase (211 aa).

Residue Ser-60 is part of the active site.

It belongs to the methyltransferase superfamily. L-isoaspartyl/D-aspartyl protein methyltransferase family.

It is found in the cytoplasm. The catalysed reaction is [protein]-L-isoaspartate + S-adenosyl-L-methionine = [protein]-L-isoaspartate alpha-methyl ester + S-adenosyl-L-homocysteine. Its function is as follows. Catalyzes the methyl esterification of L-isoaspartyl residues in peptides and proteins that result from spontaneous decomposition of normal L-aspartyl and L-asparaginyl residues. It plays a role in the repair and/or degradation of damaged proteins. The sequence is that of Protein-L-isoaspartate O-methyltransferase from Pseudomonas fluorescens (strain SBW25).